Here is a 606-residue protein sequence, read N- to C-terminus: Serine/threonine-protein kinase A-Raf (606 aa).

An RBD domain is found at 19-91 (GTVKVYLPNK…DGEELIVEVL (73 aa)). The Phorbol-ester/DAG-type zinc-finger motif lies at 98–144 (MHNFVRKTFFSLAFCDFCLKFLFHGFRCQTCGYKFHQHCSSKVPTVC). Zn(2+) is bound by residues His-99, Cys-112, Cys-115, Cys-125, Cys-128, His-133, Cys-136, and Cys-144. Phosphoserine is present on residues Ser-157 and Ser-162. The disordered stretch occupies residues 160–207 (DLSGGSRQHEAPSNRPLNELLTPQGPSPRTQHCDPEHFPFPAPANAPL). Position 181 is a phosphothreonine (Thr-181). Phosphoserine occurs at positions 186 and 214. Residues 240 to 290 (STDAAGSRGGSDGTPRGSPSPASVSSGRKSPHSKSPAEQRERKSLADDKKK) form a disordered region. Thr-253 carries the phosphothreonine modification. Phosphoserine is present on residues Ser-257 and Ser-269. Positions 274–289 (SPAEQRERKSLADDKK) are enriched in basic and acidic residues. A Protein kinase domain is found at 310-570 (VQLLKRIGTG…PQILATIELL (261 aa)). ATP contacts are provided by residues 316–324 (IGTGSFGTV) and Lys-336. Thr-318 carries the phosphothreonine modification. Catalysis depends on Asp-429, which acts as the Proton acceptor.

Belongs to the protein kinase superfamily. TKL Ser/Thr protein kinase family. RAF subfamily. As to quaternary structure, interacts with TH1L/NELFD. Requires Zn(2+) as cofactor. Dephosphorylation of Ser-214 by the SHOC2-MRAS-PP1c (SMP) complex consisting of SHOC2, GTP-bound M-Ras/MRAS and the catalytic subunit of protein phosphatase 1 (PPP1CA, PPP1CB or PPP1CC); this relieves inactivation and stimulates kinase activity. Predominantly in urogenital tissues.

It catalyses the reaction L-seryl-[protein] + ATP = O-phospho-L-seryl-[protein] + ADP + H(+). The catalysed reaction is L-threonyl-[protein] + ATP = O-phospho-L-threonyl-[protein] + ADP + H(+). In terms of biological role, involved in the transduction of mitogenic signals from the cell membrane to the nucleus. May also regulate the TOR signaling cascade. Phosphorylates PFKFB2. Serves as a positive regulator of myogenic differentiation by inducing cell cycle arrest, the expression of myogenin and other muscle-specific proteins, and myotube formation. The protein is Serine/threonine-protein kinase A-Raf (ARAF) of Homo sapiens (Human).